We begin with the raw amino-acid sequence, 112 residues long: MDSGDGYNTYSYEEGAGDAKKEVLYKIGIIMLCIVGIVVLWVLIILCCAVPRYAKSTMDAWLSSSSIMKRKMASRITGTPFEETGPHRERRWAERRTEATNQNNNDNVNRFS.

The helical transmembrane segment at 27–47 threads the bilayer; the sequence is IGIIMLCIVGIVVLWVLIILC. Residues 77–112 are disordered; that stretch reads TGTPFEETGPHRERRWAERRTEATNQNNNDNVNRFS. A compositionally biased stretch (basic and acidic residues) spans 84 to 98; the sequence is TGPHRERRWAERRTE. Residues 101–112 show a composition bias toward polar residues; the sequence is NQNNNDNVNRFS.

It belongs to the nanovirus movement protein family.

Its subcellular location is the host cell membrane. Functionally, may transport viral genome to neighboring plant cells directly through plasmosdesmata, without any budding. The movement protein allows efficient cell to cell propagation, by bypassing the host cell wall barrier. The protein is Putative movement protein (DNA-M) of Subterranean clover stunt virus (strain F) (SCSV).